The following is a 266-amino-acid chain: DNA damage-regulated autophagy modulator protein 2 (266 aa).

The next 6 helical transmembrane spans lie at 8 to 28, 53 to 73, 88 to 108, 118 to 138, 160 to 180, and 207 to 227; these read LSFL…FSYI, KCLF…TIYV, IIKL…GLSI, FAAH…YMFV, LLLV…SSVL, and ITTA…LTYI.

The protein belongs to the DRAM/TMEM150 family. As to expression, expression is down-regulated in ovarian tumors (at protein level). Widely expressed with highest levels in placenta and heart. Expressed in the retina. Not detected in brain or thymus.

Its subcellular location is the lysosome membrane. It localises to the photoreceptor inner segment. The protein resides in the apical cell membrane. Its function is as follows. Plays a role in the initiation of autophagy. In the retina, might be involved in the process of photoreceptor cells renewal and recycling to preserve visual function. Induces apoptotic cell death when coexpressed with DRAM1. In Homo sapiens (Human), this protein is DNA damage-regulated autophagy modulator protein 2 (DRAM2).